Consider the following 346-residue polypeptide: Blue-light-activated histidine kinase 2 (346 aa).

Residues 8–82 (HDKEAWGRLP…KAIRNCEEVE (75 aa)) form the PAS domain. An S-4a-FMN cysteine modification is found at Cys55. A PAC domain is found at 79–133 (EEVEETIYNYRADGEGFWNHLLMGPLEDQDEKCRYFVGIQVDMGQSESPDRATEL). One can recognise a Histidine kinase domain in the interval 139–334 (EVQHRVKNHL…IVNIDIPLSQ (196 aa)). At His142 the chain carries Phosphohistidine; by autocatalysis.

Post-translationally, FMN binds covalently to cysteine after exposure to blue light and this bond is spontaneously broken in the dark.

It catalyses the reaction ATP + protein L-histidine = ADP + protein N-phospho-L-histidine.. Photosensitive kinase that is involved in increased bacterial virulence upon exposure to light. This is Blue-light-activated histidine kinase 2 from Erythrobacter litoralis (strain HTCC2594).